A 707-amino-acid polypeptide reads, in one-letter code: Elongation factor G (707 aa).

The tr-type G domain maps to Gln8–Ala288. Residues Ala17–Thr24, Asp85–His89, and Asn139–Asp142 each bind GTP. A disordered region spans residues Ala288 to Lys308.

The protein belongs to the TRAFAC class translation factor GTPase superfamily. Classic translation factor GTPase family. EF-G/EF-2 subfamily.

It localises to the cytoplasm. In terms of biological role, catalyzes the GTP-dependent ribosomal translocation step during translation elongation. During this step, the ribosome changes from the pre-translocational (PRE) to the post-translocational (POST) state as the newly formed A-site-bound peptidyl-tRNA and P-site-bound deacylated tRNA move to the P and E sites, respectively. Catalyzes the coordinated movement of the two tRNA molecules, the mRNA and conformational changes in the ribosome. This Porphyromonas gingivalis (strain ATCC 33277 / DSM 20709 / CIP 103683 / JCM 12257 / NCTC 11834 / 2561) protein is Elongation factor G.